A 495-amino-acid polypeptide reads, in one-letter code: Trimethylamine methyltransferase MttB1 (495 aa).

A non-standard amino acid (pyrrolysine) is located at residue Pyl-334.

This sequence belongs to the trimethylamine methyltransferase family. As to quaternary structure, can form a complex with MttC.

The enzyme catalyses Co(I)-[trimethylamine-specific corrinoid protein] + trimethylamine + H(+) = methyl-Co(III)-[trimethylamine-specific corrinoid protein] + dimethylamine. It functions in the pathway one-carbon metabolism; methanogenesis from trimethylamine. Catalyzes the transfer of a methyl group from trimethylamine to the corrinoid cofactor of MttC. The chain is Trimethylamine methyltransferase MttB1 (mttB1) from Methanosarcina mazei (strain ATCC BAA-159 / DSM 3647 / Goe1 / Go1 / JCM 11833 / OCM 88) (Methanosarcina frisia).